Reading from the N-terminus, the 762-residue chain is Centrosomal protein of 85 kDa (762 aa).

Disordered regions lie at residues 1–26 (MAMQ…IQKG) and 94–119 (VMPS…SKLP). 2 stretches are compositionally biased toward polar residues: residues 14-26 (HVTS…IQKG) and 98-111 (TLGT…STPV). Serine 17 carries the post-translational modification Phosphoserine. Phosphoserine is present on residues serine 126 and serine 141. The tract at residues 257 to 433 (GLSKPLPSQV…QLIRESLKVA (177 aa)) is mediates interaction with NEK2 and is required for its function in the suppression of centrosome disjunction. Coiled coils occupy residues 334-657 (EHLL…RQAQ) and 723-750 (PDVI…MSDR). The tract at residues 434–476 (LQKHSEEVKKQEERVKGRDKHINNLKKKCQKESEQNREKQQRI) is required for centrosome localization and for its function in the suppression of centrosome disjunction. 2 stretches are compositionally biased toward basic and acidic residues: residues 443-455 (KQEE…DKHI) and 463-474 (QKESEQNREKQQ). Disordered stretches follow at residues 443–474 (KQEE…EKQQ) and 541–570 (EAEF…VEME). The residue at position 623 (serine 623) is a Phosphoserine.

The protein belongs to the CEP85 family. Homodimer. Interacts with STIL (via N-terminus); this interaction is essential for robust PLK4 activation and efficient centriole assembly and for PLK4-dependent cell migration. Interacts with PLK4; required for CEP85 to be able to drive centriole duplication and cell migration.

The protein resides in the cytoplasm. It localises to the cytoskeleton. It is found in the microtubule organizing center. Its subcellular location is the centrosome. The protein localises to the spindle pole. The protein resides in the nucleus. It localises to the nucleolus. It is found in the centriole. Its subcellular location is the cell cortex. Functionally, acts as a regulator of centriole duplication through a direct interaction with STIL, a key factor involved in the early steps of centriole formation. The CEP85-STIL protein complex acts as a modulator of PLK4-driven cytoskeletal rearrangements and directional cell motility. Acts as a negative regulator of NEK2 to maintain the centrosome integrity in interphase. Suppresses centrosome disjunction by inhibiting NEK2 kinase activity. The protein is Centrosomal protein of 85 kDa of Homo sapiens (Human).